The following is a 215-amino-acid chain: Cytochrome b6 (215 aa).

Residues 32–52 (IFYCLGGITLTCFLVQVATGF) traverse the membrane as a helical segment. C35 is a binding site for heme c. H86 and H100 together coordinate heme b. Transmembrane regions (helical) follow at residues 90-110 (ASMM…TGGF), 116-136 (LTWV…VTGY), and 186-206 (LHTF…FLMI). H187 and H202 together coordinate heme b.

Belongs to the cytochrome b family. PetB subfamily. The 4 large subunits of the cytochrome b6-f complex are cytochrome b6, subunit IV (17 kDa polypeptide, PetD), cytochrome f and the Rieske protein, while the 4 small subunits are PetG, PetL, PetM and PetN. The complex functions as a dimer. Requires heme b as cofactor. Heme c serves as cofactor.

The protein resides in the plastid. It is found in the chloroplast thylakoid membrane. In terms of biological role, component of the cytochrome b6-f complex, which mediates electron transfer between photosystem II (PSII) and photosystem I (PSI), cyclic electron flow around PSI, and state transitions. This chain is Cytochrome b6, found in Welwitschia mirabilis (Tree tumbo).